We begin with the raw amino-acid sequence, 97 residues long: MKRICSIYKSPRKNEMYLYVLKADGLERVPEGLLPFFGTPVHAFDLVLTPERKLAREDITKVLENLESQGYHLQMPPLEDEYIEHLPEELLRRNDPV.

In terms of domain architecture, YcgL spans 3–87 (RICSIYKSPR…LEDEYIEHLP (85 aa)).

The protein is YcgL domain-containing protein PP_4590 of Pseudomonas putida (strain ATCC 47054 / DSM 6125 / CFBP 8728 / NCIMB 11950 / KT2440).